The following is a 405-amino-acid chain: 8-amino-7-oxononanoate synthase (405 aa).

A substrate-binding site is contributed by Arg23. Residue 114–115 (GY) participates in pyridoxal 5'-phosphate binding. His139 is a binding site for substrate. Pyridoxal 5'-phosphate-binding residues include Ser185, His213, and Thr245. Residue Lys248 is modified to N6-(pyridoxal phosphate)lysine. Thr366 is a substrate binding site.

It belongs to the class-II pyridoxal-phosphate-dependent aminotransferase family. BioF subfamily. Homodimer. The cofactor is pyridoxal 5'-phosphate.

It catalyses the reaction 6-carboxyhexanoyl-[ACP] + L-alanine + H(+) = (8S)-8-amino-7-oxononanoate + holo-[ACP] + CO2. The protein operates within cofactor biosynthesis; biotin biosynthesis. Functionally, catalyzes the decarboxylative condensation of pimeloyl-[acyl-carrier protein] and L-alanine to produce 8-amino-7-oxononanoate (AON), [acyl-carrier protein], and carbon dioxide. The protein is 8-amino-7-oxononanoate synthase of Delftia acidovorans (strain DSM 14801 / SPH-1).